Here is a 148-residue protein sequence, read N- to C-terminus: Putative pre-16S rRNA nuclease (148 aa).

Belongs to the YqgF nuclease family.

The protein resides in the cytoplasm. Could be a nuclease involved in processing of the 5'-end of pre-16S rRNA. This is Putative pre-16S rRNA nuclease from Nitrosomonas europaea (strain ATCC 19718 / CIP 103999 / KCTC 2705 / NBRC 14298).